Consider the following 505-residue polypeptide: UDP-N-acetylglucosamine diphosphorylase 1 (505 aa).

Over residues 1–10 (MIEPSMEREN) the composition is skewed to basic and acidic residues. Residues 1–32 (MIEPSMERENGALTAATTTTTAVTSPPPMASS) are disordered. Positions 14–24 (TAATTTTTAVT) are enriched in low complexity. The Substrate binding signature appears at 134-137 (LSGG). A substrate-binding site is contributed by N253. Residues 335–336 (EY) carry the Substrate binding motif. Position 432 (K432) interacts with substrate.

The protein belongs to the UDPGP type 1 family. Monomer. It depends on Mg(2+) as a cofactor. Mn(2+) serves as cofactor. Expressed in root tips, stipules and mature pollen grains.

It carries out the reaction N-acetyl-alpha-D-glucosamine 1-phosphate + UTP + H(+) = UDP-N-acetyl-alpha-D-glucosamine + diphosphate. The enzyme catalyses N-acetyl-alpha-D-galactosamine 1-phosphate + UTP + H(+) = UDP-N-acetyl-alpha-D-galactosamine + diphosphate. It functions in the pathway nucleotide-sugar biosynthesis; UDP-N-acetyl-alpha-D-glucosamine biosynthesis; UDP-N-acetyl-alpha-D-glucosamine from N-acetyl-alpha-D-glucosamine 1-phosphate: step 1/1. Its activity is regulated as follows. Inhibited by hygromycin and streptomycin, but not by gentamycin or kanamycin. Functionally, uridylyltransferase involved in the biosynthesis of UDP-glucosamine, an essential precursor for glycoprotein and glycolipid synthesis. Can use both UDP-glucosamine and the 4-epimer UDP-galactosamine as substrates, but no other sugars or NTPs. Acts redundantly with GLCNAC1PUT2. Required for gametogenesis and embryo development. The polypeptide is UDP-N-acetylglucosamine diphosphorylase 1 (GLCNAC1PUT1) (Arabidopsis thaliana (Mouse-ear cress)).